A 790-amino-acid polypeptide reads, in one-letter code: Type VI secretion system spike protein VgrG5 (790 aa).

Composition is skewed to basic and acidic residues over residues 753-763 and 772-790; these read GFRDYRAEMPQ and AYRRDASRPGAADKDEPTP. The disordered stretch occupies residues 753–790; that stretch reads GFRDYRAEMPQHKPRSAPDAYRRDASRPGAADKDEPTP.

It belongs to the VgrG protein family.

It is found in the secreted. Part of the H2 type VI secretion system (H2-T6SS) specialized secretion system, which delivers several virulence factors in both prokaryotic and eukaryotic cells during infection. Allows the delivery of the phospholipase effector PldB to target cells where it exerts its toxicity. Also plays a role in VgrG4b and its effector PldA secretion. This chain is Type VI secretion system spike protein VgrG5, found in Pseudomonas aeruginosa (strain ATCC 15692 / DSM 22644 / CIP 104116 / JCM 14847 / LMG 12228 / 1C / PRS 101 / PAO1).